The sequence spans 105 residues: Guanidinium exporter (105 aa).

The chain crosses the membrane as a helical span at residues M1–K21. At Y22–R28 the chain is on the cytoplasmic side. The chain crosses the membrane as a helical span at residues L29 to A49. Residues M50–T57 are Periplasmic-facing. The helical transmembrane segment at A58 to L78 threads the bilayer. At G79–S81 the chain is on the cytoplasmic side. A helical membrane pass occupies residues A82–L102. The Periplasmic portion of the chain corresponds to S103–H105.

This sequence belongs to the drug/metabolite transporter (DMT) superfamily. Small multidrug resistance (SMR) (TC 2.A.7.1) family. Gdx/SugE subfamily.

The protein resides in the cell inner membrane. In terms of biological role, guanidinium ion exporter. Couples guanidinium export to the proton motive force, exchanging one guanidinium ion for two protons. The chain is Guanidinium exporter from Escherichia coli O6:H1 (strain CFT073 / ATCC 700928 / UPEC).